We begin with the raw amino-acid sequence, 657 residues long: Macrolide export ATP-binding/permease protein MacB (657 aa).

Positions 5 to 242 constitute an ABC transporter domain; the sequence is LELLDVHRTY…RAVTGESAFD (238 aa). 41–48 contributes to the ATP binding site; it reads GASGSGKS. The next 4 helical transmembrane spans lie at 276-296, 538-558, 596-616, and 620-640; these read FLSV…MALG, IAAI…LVSV, IGVF…GWAV, and LLSV…FGLW.

It belongs to the ABC transporter superfamily. Macrolide exporter (TC 3.A.1.122) family. In terms of assembly, homodimer.

Its subcellular location is the cell inner membrane. Its function is as follows. Non-canonical ABC transporter that contains transmembrane domains (TMD), which form a pore in the inner membrane, and an ATP-binding domain (NBD), which is responsible for energy generation. Confers resistance against macrolides. The sequence is that of Macrolide export ATP-binding/permease protein MacB from Chlorobium phaeobacteroides (strain DSM 266 / SMG 266 / 2430).